The chain runs to 859 residues: ATP-dependent RNA helicase DDX24 (859 aa).

Residue lysine 17 is modified to N6-acetyllysine. Serine 60 carries the post-translational modification Phosphoserine. A disordered region spans residues proline 61–alanine 170. Position 71 is an N6-acetyllysine (lysine 71). Phosphoserine is present on residues serine 82 and serine 94. Positions serine 94–lysine 105 are enriched in basic residues. A compositionally biased stretch (polar residues) spans asparagine 106–glutamine 115. Residues leucine 125–alanine 139 show a composition bias toward acidic residues. The Q motif motif lies at serine 192 to alanine 220. A Helicase ATP-binding domain is found at alanine 224–lysine 528. Position 237–244 (alanine 237–threonine 244) interacts with ATP. The tract at residues asparagine 262–aspartate 300 is disordered. Residues threonine 277–alanine 293 are compositionally biased toward basic and acidic residues. Residues serine 287 and serine 295 each carry the phosphoserine modification. Threonine 302 bears the Phosphothreonine mark. The segment at serine 326–lysine 376 is disordered. Lysine 370 is covalently cross-linked (Glycyl lysine isopeptide (Lys-Gly) (interchain with G-Cter in SUMO2)). The DEAD box signature appears at aspartate 471–aspartate 474. Positions tyrosine 578 to aspartate 723 constitute a Helicase C-terminal domain. Residues lysine 624, lysine 808, and lysine 825 each participate in a glycyl lysine isopeptide (Lys-Gly) (interchain with G-Cter in SUMO2) cross-link. Composition is skewed to polar residues over residues proline 799–glycine 814 and proline 823–leucine 833. Residues proline 799–asparagine 859 are disordered.

It belongs to the DEAD box helicase family. DDX24/MAK5 subfamily. In terms of assembly, interacts with FADD. Interacts with RIPK1; this interaction disrupts RLR signaling activation of IFN-dependent transcription factor IRF7. Interacts with NIP7. Interacts with EP300; this interaction prevents TP53 acetylation mediated by EP300. As to quaternary structure, (Microbial infection) Interacts with HIV-1 virus Gag and Rev proteins. Post-translationally, ubiquitinated by MDM2 without targeting DDX24 for proteasomal degradation. Instead, polyubiquitinated DDX24 promotes interaction with NIP7, a component of pre-rRNP processing complex, and associates with pre-rRNA molecules and pre-ribosomal particles. Ubiquitous. Most abundant in heart and brain, but with lowest levels in thymus and small intestine.

Its subcellular location is the cytoplasm. The protein resides in the nucleus. It carries out the reaction ATP + H2O = ADP + phosphate + H(+). ATP-dependent RNA helicase that plays a role in various aspects of RNA metabolism including pre-mRNA splicing and is thereby involved in different biological processes such as cell cycle regulation or innate immunity. Plays an inhibitory role in TP53 transcriptional activity and subsequently in TP53 controlled cell growth arrest and senescence by inhibiting its EP300 mediated acetylation. Negatively regulates cytosolic RNA-mediated innate immune signaling at least in part by affecting RIPK1/IRF7 interactions. Alternatively, possesses antiviral activity by recognizing gammaherpesvirus transcripts in the context of lytic reactivation. Plays an essential role in cell cycle regulation in vascular smooth muscle cells by interacting with and regulating FANCA (Fanconi anemia complementation group A) mRNA. Its function is as follows. (Microbial infection) Plays a positive role in HIV-1 infection by promoting Rev-dependent nuclear export of viral RNAs and their packaging into virus particles. This Homo sapiens (Human) protein is ATP-dependent RNA helicase DDX24 (DDX24).